The chain runs to 74 residues: Large ribosomal subunit protein bL28 (74 aa).

This sequence belongs to the bacterial ribosomal protein bL28 family.

The protein is Large ribosomal subunit protein bL28 of Desulforapulum autotrophicum (strain ATCC 43914 / DSM 3382 / VKM B-1955 / HRM2) (Desulfobacterium autotrophicum).